The following is a 615-amino-acid chain: NEDD8 ultimate buster 1 (615 aa).

Coiled coils occupy residues Leu36 to Arg70 and Lys152 to Thr203. UBA domains are found at residues Tyr374–Asn413, Glu424–Asn470, and Ser489–Asn529. A Nuclear localization signal motif is present at residues Arg414–Arg431. The NEDD8-binding 1 stretch occupies residues Glu427 to Trp474. Positions Ser532–Tyr586 are disordered. The span at Leu539–Ser562 shows a compositional bias: low complexity. An NEDD8-binding 2 region spans residues Thr550–Ile598. The span at Thr563–Tyr586 shows a compositional bias: acidic residues.

Directly interacts with NEDD8 and PSMD4/S5a, a member of the regulatory subunit of the 26S proteasome. Isoform 1 binds to NEDD8 more efficiently than isoform 2. Interacts with AIPL1. The interaction with UBD via UBA domains facilitates the linking of UBD-conjugated target protein to the proteasome complex and accelerates UBD degradation and that of its conjugates. As to expression, widely expressed with lowest expression in the pancreas for isoform 1 and in leukocytes, liver, prostate and skeletal muscle for isoform 2.

The protein resides in the nucleus. Functionally, specific down-regulator of the NEDD8 conjugation system. Recruits NEDD8, UBD, and their conjugates to the proteasome for degradation. Isoform 1 promotes the degradation of NEDD8 more efficiently than isoform 2. In Homo sapiens (Human), this protein is NEDD8 ultimate buster 1 (NUB1).